The chain runs to 415 residues: ER-derived vesicles protein ERV46 (415 aa).

Topologically, residues 1–24 (MKRSTLLSLDAFAKTEEDVRVRTR) are cytoplasmic. Residues 25 to 45 (AGGLITLSCILTTLFLLVNEW) form a helical membrane-spanning segment. Residues 46 to 376 (GQFNSVVTRP…VINKEQHGQT (331 aa)) lie on the Lumenal side of the membrane. A helical membrane pass occupies residues 377–397 (WSGFILNCITSIGGVLAVGTV). Topologically, residues 398 to 415 (MDKLFYKAQRSIWGKKSQ) are cytoplasmic. Residues 402 to 403 (FY) carry the Phenylalanine-tyrosine motif motif.

Belongs to the ERGIC family. In terms of assembly, interacts with ERV41.

The protein localises to the endoplasmic reticulum membrane. The protein resides in the golgi apparatus membrane. Functionally, constituent of COPII-coated endoplasmic reticulum-derived transport vesicles. Required for efficient transport of a subset of secretory proteins to the Golgi. The C-terminal Phe-Tyr motif is required for exit from the endoplasmic reticulum. Facilitates retrograde transport from the Golgi to the endoplasmic reticulum. The chain is ER-derived vesicles protein ERV46 (ERV46) from Saccharomyces cerevisiae (strain ATCC 204508 / S288c) (Baker's yeast).